We begin with the raw amino-acid sequence, 425 residues long: MSHIRHLAQQCRDAARILATLSTDAKRRLLETMATALNTDAATILAANAADLDAARTQQVGTAMLDRLALDPQRLAAMADALRDIAALPDPVGQVTRDDRRPNGIHIQKIRVPLGVIAMIYEARPNVTADAAALCIKAGNGIILRGGSEAIRSNIAIATALQRALRLASLPETALILVQDMARHTMLELLQLSDLIDLVIPRGGEGLIRFVAEHARIPVIKHYKGVCHQFVDASADIEMAIRLLIDGKTTRPAACNALETLLVHTDIAPRFLPAAAAALRPYGVQLRGDHATCTLLPDVLLATDADYAAEYLDLILAIRIVPNLDAALEHIRRYGSDHTEVIVTADPAHADTFVQQLPSAVVMVNASSRFSDGGALGLGAEIGISTTRLHAYGPMGLDALTVERFVVRGQGQVRHCPPYPPAPRR.

This sequence belongs to the gamma-glutamyl phosphate reductase family.

Its subcellular location is the cytoplasm. The catalysed reaction is L-glutamate 5-semialdehyde + phosphate + NADP(+) = L-glutamyl 5-phosphate + NADPH + H(+). It participates in amino-acid biosynthesis; L-proline biosynthesis; L-glutamate 5-semialdehyde from L-glutamate: step 2/2. Functionally, catalyzes the NADPH-dependent reduction of L-glutamate 5-phosphate into L-glutamate 5-semialdehyde and phosphate. The product spontaneously undergoes cyclization to form 1-pyrroline-5-carboxylate. The sequence is that of Gamma-glutamyl phosphate reductase from Xylella fastidiosa (strain M23).